The chain runs to 244 residues: 7-cyano-7-deazaguanine synthase (244 aa).

14-24 serves as a coordination point for ATP; sequence FSGGQDSATCV. The Zn(2+) site is built by Cys-202, Cys-217, Cys-220, and Cys-223.

It belongs to the QueC family. Requires Zn(2+) as cofactor.

The enzyme catalyses 7-carboxy-7-deazaguanine + NH4(+) + ATP = 7-cyano-7-deazaguanine + ADP + phosphate + H2O + H(+). Its pathway is purine metabolism; 7-cyano-7-deazaguanine biosynthesis. In terms of biological role, catalyzes the ATP-dependent conversion of 7-carboxy-7-deazaguanine (CDG) to 7-cyano-7-deazaguanine (preQ(0)). The protein is 7-cyano-7-deazaguanine synthase of Burkholderia cenocepacia (strain ATCC BAA-245 / DSM 16553 / LMG 16656 / NCTC 13227 / J2315 / CF5610) (Burkholderia cepacia (strain J2315)).